We begin with the raw amino-acid sequence, 129 residues long: Ribulose bisphosphate carboxylase small subunit (129 aa).

This sequence belongs to the RuBisCO small chain family. In terms of assembly, heterohexadecamer of 8 large and 8 small subunits.

RuBisCO catalyzes two reactions: the carboxylation of D-ribulose 1,5-bisphosphate, the primary event in carbon dioxide fixation, as well as the oxidative fragmentation of the pentose substrate. Both reactions occur simultaneously and in competition at the same active site. Although the small subunit is not catalytic it is essential for maximal activity. The chain is Ribulose bisphosphate carboxylase small subunit from Cereibacter sphaeroides (Rhodobacter sphaeroides).